Here is a 144-residue protein sequence, read N- to C-terminus: Mannitol-specific phosphotransferase enzyme IIA component (144 aa).

Residues 3–142 (ELFSNDNIFL…EEIKQVFEEA (140 aa)) form the PTS EIIA type-2 domain. Catalysis depends on histidine 63, which acts as the Tele-phosphohistidine intermediate. Histidine 63 bears the Phosphohistidine; by HPr mark.

As to quaternary structure, homodimer or homotrimer. Seems to be a monomer when not phosphorylated.

The protein localises to the cytoplasm. The phosphoenolpyruvate-dependent sugar phosphotransferase system (sugar PTS), a major carbohydrate active transport system, catalyzes the phosphorylation of incoming sugar substrates concomitantly with their translocation across the cell membrane. The enzyme II CmtAB PTS system is involved in D-mannitol transport. This chain is Mannitol-specific phosphotransferase enzyme IIA component (mtlF), found in Staphylococcus aureus (strain MRSA252).